The sequence spans 796 residues: Disintegrin and metalloproteinase domain-containing protein B (796 aa).

The first 23 residues, 1–23, serve as a signal peptide directing secretion; that stretch reads MKALSCLLAVIATAGSLFQHVDA. Topologically, residues 24 to 706 are extracellular; that stretch reads RSHARDRLNN…VSDWVSRHKP (683 aa). N33, N226, N313, and N407 each carry an N-linked (GlcNAc...) asparagine glycan. Positions 271-510 constitute a Peptidase M12B domain; sequence RVALIGVVAD…HSILTNCLTT (240 aa). 3 cysteine pairs are disulfide-bonded: C395–C495, C448–C459, and C580–C600. H431 contributes to the Zn(2+) binding site. The active site involves E432. Residues H435 and H441 each contribute to the Zn(2+) site. The region spanning 519 to 608 is the Disintegrin domain; that stretch reads GQQCGNGIVE…DCPRDTHSKN (90 aa). The helical transmembrane segment at 707–727 threads the bilayer; that stretch reads IVIGVAVGVGCLLLLAILSCI. The Cytoplasmic segment spans residues 728-796; it reads CGRSKKRRPR…PGRMPSTRYA (69 aa). Positions 737–796 are disordered; that stretch reads RNRKMAPINMRPMPPVYNGWTGPPPNAESPGGHPQYNHVPPPINAPPPAYPGRMPSTRYA. Positions 775–786 are enriched in pro residues; sequence VPPPINAPPPAY.

Requires Zn(2+) as cofactor.

It is found in the membrane. Functionally, probable zinc protease. The protein is Disintegrin and metalloproteinase domain-containing protein B (ADM-B) of Arthroderma otae (strain ATCC MYA-4605 / CBS 113480) (Microsporum canis).